The following is a 121-amino-acid chain: Large ribosomal subunit protein bL17 (121 aa).

Belongs to the bacterial ribosomal protein bL17 family. Part of the 50S ribosomal subunit. Contacts protein L32.

The chain is Large ribosomal subunit protein bL17 from Mycoplasmopsis agalactiae (strain NCTC 10123 / CIP 59.7 / PG2) (Mycoplasma agalactiae).